Here is a 178-residue protein sequence, read N- to C-terminus: Crossover junction endodeoxyribonuclease RuvC (178 aa).

Residues Asp-20, Glu-80, and Asp-154 contribute to the active site. Residues Asp-20, Glu-80, and Asp-154 each coordinate Mg(2+).

This sequence belongs to the RuvC family. In terms of assembly, homodimer which binds Holliday junction (HJ) DNA. The HJ becomes 2-fold symmetrical on binding to RuvC with unstacked arms; it has a different conformation from HJ DNA in complex with RuvA. In the full resolvosome a probable DNA-RuvA(4)-RuvB(12)-RuvC(2) complex forms which resolves the HJ. It depends on Mg(2+) as a cofactor.

The protein resides in the cytoplasm. The enzyme catalyses Endonucleolytic cleavage at a junction such as a reciprocal single-stranded crossover between two homologous DNA duplexes (Holliday junction).. Its function is as follows. The RuvA-RuvB-RuvC complex processes Holliday junction (HJ) DNA during genetic recombination and DNA repair. Endonuclease that resolves HJ intermediates. Cleaves cruciform DNA by making single-stranded nicks across the HJ at symmetrical positions within the homologous arms, yielding a 5'-phosphate and a 3'-hydroxyl group; requires a central core of homology in the junction. The consensus cleavage sequence is 5'-(A/T)TT(C/G)-3'. Cleavage occurs on the 3'-side of the TT dinucleotide at the point of strand exchange. HJ branch migration catalyzed by RuvA-RuvB allows RuvC to scan DNA until it finds its consensus sequence, where it cleaves and resolves the cruciform DNA. The polypeptide is Crossover junction endodeoxyribonuclease RuvC (Rhodopirellula baltica (strain DSM 10527 / NCIMB 13988 / SH1)).